The primary structure comprises 1984 residues: Sodium channel protein type 9 subunit alpha (1984 aa).

Over 1 to 125 the chain is Cytoplasmic; that stretch reads MAMLPPPGPQ…RRISIKILVH (125 aa). A compositionally biased stretch (basic and acidic residues) spans 26 to 47; that stretch reads RIAEGKTKEPKEEKKDDHDEGP. A disordered region spans residues 26 to 55; the sequence is RIAEGKTKEPKEEKKDDHDEGPKPSSDLEA. The I repeat unit spans residues 112–408; sequence FSPLRRISIK…VAMAYEEQNQ (297 aa). A helical membrane pass occupies residues 126 to 145; the sequence is SLFSMLIMCTILTNCIFMTM. Residues 146-150 lie on the Extracellular side of the membrane; it reads NNPAE. Residues 151 to 172 form a helical membrane-spanning segment; that stretch reads WTKNVEYTFTGIYTFESLVKIF. The Cytoplasmic portion of the chain corresponds to 173–185; sequence ARGFCVGEFTFLR. The helical transmembrane segment at 186–204 threads the bilayer; sequence DPWNWLDFIVIVFAYLTEF. Residues 205–210 lie on the Extracellular side of the membrane; the sequence is VNLGNV. Asn209 is a glycosylation site (N-linked (GlcNAc...) asparagine). Residues 211–227 form a helical membrane-spanning segment; it reads SALRTFRVLRALKTISV. At 228–241 the chain is on the cytoplasmic side; it reads IPGLKTIVGALIQS. The helical transmembrane segment at 242-267 threads the bilayer; that stretch reads VKKLSDVIILTVFCLSVFALIGLQLF. Topologically, residues 268-344 are extracellular; sequence MGHLKHKCLR…PDYGYTSFDT (77 aa). A disulfide bridge connects residues Cys275 and Cys322. Asn281 carries an N-linked (GlcNAc...) asparagine glycan. Positions 345 to 361 form an intramembrane region, pore-forming; that stretch reads FSWAFLALFRLMTQDYW. Topologically, residues 362 to 374 are extracellular; the sequence is ENLYQQTLRAAGK. Residues 375 to 400 form a helical membrane-spanning segment; sequence TYMIFFVVVIFLGSFYLINLILAVVA. The Cytoplasmic portion of the chain corresponds to 401-742; sequence MAYEEQNQAN…FIYIIVMDPF (342 aa). Positions 459-469 are enriched in low complexity; sequence SSSETSKLSSK. Disordered stretches follow at residues 459 to 517 and 563 to 610; these read SSSE…LGVE and GSET…PPML. Residues 472–484 are compositionally biased toward basic residues; sequence KERRNRRKKKNQK. Composition is skewed to basic and acidic residues over residues 487–508 and 571–583; these read SSGE…ESIS and DEHS…ESRR. One copy of the II repeat lies at 723-986; it reads CSPFWIKFKK…EEDTDANNLQ (264 aa). The chain crosses the membrane as a helical span at residues 743–759; that stretch reads VDLAITICIVLNTLFMA. The Extracellular segment spans residues 760–768; it reads MEHHPMTEE. The chain crosses the membrane as a helical span at residues 769–793; the sequence is FKNVLVVGNLVFTGIFAAEMVLKLI. Over 794-802 the chain is Cytoplasmic; that stretch reads AMDPYEYFQ. The chain crosses the membrane as a helical span at residues 803-819; that stretch reads VGWNVFDSLIVTLSLVE. The Extracellular segment spans residues 820–828; it reads LFLADVEGL. A helical membrane pass occupies residues 829 to 845; it reads SVLRSFRLLRVFKLAKS. Residues 846-862 lie on the Cytoplasmic side of the membrane; that stretch reads WPTLNMLIKIIGNSVGP. A helical membrane pass occupies residues 863 to 885; sequence LGNLTLVLAIIVFIFAVVGMQLF. The Extracellular segment spans residues 886–912; sequence GKSYKECVCKINDDCSLPRWHMNDFFH. Residues Cys894 and Cys900 are joined by a disulfide bond. The segment at residues 913–925 is an intramembrane region (pore-forming); it reads SFLIVFRVLCGEW. At 926 to 937 the chain is on the extracellular side; that stretch reads IETMWDCMEVAG. A disulfide bridge connects residues Cys932 and Cys941. A helical transmembrane segment spans residues 938–964; the sequence is QAMCLIVYMMVMVIGNLVVLNLFLALL. Residues 965–1184 lie on the Cytoplasmic side of the membrane; sequence LSSFSSDNLS…WWNIRKTCYR (220 aa). The tract at residues 1087–1146 is disordered; that stretch reads PIAPGESDLENMNTEELSSDSESEYSKERLNRSSSSECSTVDNALPGEGEEAEAEPVNSD. Polar residues predominate over residues 1118–1128; it reads RSSSSECSTVD. Residues 1134–1146 show a composition bias toward acidic residues; it reads EGEEAEAEPVNSD. An III repeat occupies 1177-1485; that stretch reads NIRKTCYRIV…KKYYNAMKKL (309 aa). The chain crosses the membrane as a helical span at residues 1185–1209; sequence IVEHSWFESFIVLMILLSSGALAFE. Topologically, residues 1210 to 1221 are extracellular; it reads DIYIEKKKTIKI. A helical membrane pass occupies residues 1222-1247; it reads ILEYADKIFTYIFILEMLLKWVAYGY. The Cytoplasmic portion of the chain corresponds to 1248–1249; it reads KT. The chain crosses the membrane as a helical span at residues 1250–1275; sequence YFTNAWCWLDFLIVDVSLVTLVANTL. The Extracellular portion of the chain corresponds to 1276–1284; it reads GYSDLGPIK. A helical membrane pass occupies residues 1285 to 1301; sequence SLRTLRALRPLRALSRF. Residues 1302–1314 are Cytoplasmic-facing; the sequence is EGMRVVVNALIGA. A helical membrane pass occupies residues 1315-1339; it reads IPSIMNVLLVCLIFWLIFSIMGVNL. Topologically, residues 1340–1391 are extracellular; the sequence is FAGKFYQCVNTTDDSRFPTKQVSNRSECFALMNGSQNVRWKNLKVNFDNVGL. Cys1347 and Cys1367 are disulfide-bonded. Asn1349, Asn1363, and Asn1372 each carry an N-linked (GlcNAc...) asparagine glycan. The pore-forming intramembrane region spans 1392–1402; sequence RYLSLLQVATF. The Extracellular segment spans residues 1403-1428; it reads KGWMDIMYAAVDSVNVDQQPSYEHNL. Residues 1429-1454 form a helical membrane-spanning segment; the sequence is YMYIYFVIFIIFGSFFTLNLFIGVII. The Cytoplasmic segment spans residues 1455-1511; the sequence is DNFNQQKKKLGGQDIFMTEEQKKYYNAMKKLGSKKPQKPIPRPGNKFQGCIFDLVTN. A Phosphoserine; by PKC modification is found at Ser1487. The IV repeat unit spans residues 1494-1792; the sequence is IPRPGNKFQG…WEKFDPDATQ (299 aa). A helical transmembrane segment spans residues 1512–1531; it reads QAFDITIMILICLNMVTMMV. At 1532–1542 the chain is on the extracellular side; sequence EKEGQSDYMTD. The helical transmembrane segment at 1543–1564 threads the bilayer; sequence VLYWINVVFIILFTGECVLKLI. The Cytoplasmic segment spans residues 1565-1573; the sequence is SLRHYYFTI. The helical transmembrane segment at 1574 to 1595 threads the bilayer; sequence GWNIFDFVVVILSIVGMFLAEL. Over 1596-1604 the chain is Extracellular; the sequence is IETYFVSPT. Residues 1605–1624 traverse the membrane as a helical segment; sequence LFRVIRLARIGRILRLIKGA. The Cytoplasmic segment spans residues 1625 to 1637; it reads KGIRTLLFALMMS. Residues 1638 to 1660 form a helical membrane-spanning segment; sequence LPALFNIGLLLFLVMFIYAIFGM. At 1661–1683 the chain is on the extracellular side; sequence SNFAYVKKEAGINDMFNFETFGN. Positions 1684-1696 form an intramembrane region, pore-forming; sequence SMICLFQITTSAG. At 1697–1730 the chain is on the extracellular side; sequence WDGLLAPILNSAPPDCDPKKVHPGSSTEGDCGSP. A disulfide bridge connects residues Cys1712 and Cys1727. The helical transmembrane segment at 1731 to 1756 threads the bilayer; sequence SVGIFYFVSYIIISFLVVVNMYIAVI. The Cytoplasmic segment spans residues 1757 to 1984; sequence LENFSVATEE…KGKDGKETKK (228 aa). Positions 1886-1915 constitute an IQ domain; it reads EDVSATVIQRAYRRYRLRQNVKNISSIYIK. The segment at 1924-1984 is disordered; it reads PNKGDIVFDN…KGKDGKETKK (61 aa). A compositionally biased stretch (polar residues) spans 1933–1956; sequence NVNSSSPEKTDATASTISPPSYDS. A compositionally biased stretch (basic and acidic residues) spans 1958-1984; it reads TKPDKEKYEKDKTEKEDKGKDGKETKK.

Belongs to the sodium channel (TC 1.A.1.10) family. Nav1.7/SCN9A subfamily. The Nav1.7 voltage-gated sodium channel consists of an ion-conducting alpha subunit SCN9A which is functional on its own regulated by one or more beta-1 (SCN1B), beta-2 (SCN2B), beta-3 (SCN3B) and beta-4 (SCN4B) subunits. SCN1B and SCN3B are non-covalently associated with SCN9A. SCN2B and SCN4B are disulfide-linked to SCN9A. SCN1B regulates channel inactivation. Interacts with NEDD4 and NEDD4L; regulates Nav1.7 activity most probably through ubiquitination and subsequent endocytosis. Interacts with TMEM233; modulates the gating properties of NaV1.7. Post-translationally, phosphorylation at Ser-1487 by PKC in a highly conserved cytoplasmic loop increases peak sodium currents. Ubiquitinated by NEDD4L; which may promote its endocytosis. In terms of tissue distribution, expressed in the sciatic nerve, spinal cord, brainstem, cerebellum and cortex, but not expressed in the lung, skeletal and cardiac muscles, kidney and liver.

The protein resides in the cell membrane. The protein localises to the cell projection. It localises to the neuron projection. It is found in the axon. The catalysed reaction is Na(+)(in) = Na(+)(out). Functionally, pore-forming subunit of Nav1.7, a voltage-gated sodium (Nav) channel that directly mediates the depolarizing phase of action potentials in excitable membranes. Navs, also called VGSCs (voltage-gated sodium channels) or VDSCs (voltage-dependent sodium channels), operate by switching between closed and open conformations depending on the voltage difference across the membrane. In the open conformation they allow Na(+) ions to selectively pass through the pore, along their electrochemical gradient. The influx of Na(+) ions provokes membrane depolarization, initiating the propagation of electrical signals throughout cells and tissues. Nav1.7 plays a crucial role in controlling the excitability and action potential propagation from nociceptor neurons, thereby contributing to the sensory perception of pain. This chain is Sodium channel protein type 9 subunit alpha, found in Oryctolagus cuniculus (Rabbit).